The chain runs to 226 residues: UPF0758 protein SPs0978 (226 aa).

Positions 103–225 (SVLTSVQVAE…YYSFREKSTL (123 aa)) constitute an MPN domain. Residues His-174, His-176, and Asp-187 each contribute to the Zn(2+) site. The JAMM motif motif lies at 174 to 187 (HNHPSGNIEPSSND).

It belongs to the UPF0758 family.

This is UPF0758 protein SPs0978 from Streptococcus pyogenes serotype M3 (strain SSI-1).